Reading from the N-terminus, the 279-residue chain is Probable nicotinate-nucleotide pyrophosphorylase [carboxylating] (279 aa).

Residues arginine 90, 125-127, arginine 149, lysine 159, glutamate 189, aspartate 210, 238-240, and 259-261 each bind substrate; these read TRK, SGG, and MGF.

This sequence belongs to the NadC/ModD family. Hexamer formed by 3 homodimers.

The catalysed reaction is nicotinate beta-D-ribonucleotide + CO2 + diphosphate = quinolinate + 5-phospho-alpha-D-ribose 1-diphosphate + 2 H(+). Its pathway is cofactor biosynthesis; NAD(+) biosynthesis; nicotinate D-ribonucleotide from quinolinate: step 1/1. In terms of biological role, involved in the catabolism of quinolinic acid (QA). This chain is Probable nicotinate-nucleotide pyrophosphorylase [carboxylating] (nadC), found in Methanothermobacter thermautotrophicus (strain ATCC 29096 / DSM 1053 / JCM 10044 / NBRC 100330 / Delta H) (Methanobacterium thermoautotrophicum).